We begin with the raw amino-acid sequence, 100 residues long: Urease subunit gamma (100 aa).

The protein belongs to the urease gamma subunit family. As to quaternary structure, heterotrimer of UreA (gamma), UreB (beta) and UreC (alpha) subunits. Three heterotrimers associate to form the active enzyme.

The protein resides in the cytoplasm. The enzyme catalyses urea + 2 H2O + H(+) = hydrogencarbonate + 2 NH4(+). The protein operates within nitrogen metabolism; urea degradation; CO(2) and NH(3) from urea (urease route): step 1/1. This is Urease subunit gamma from Jannaschia sp. (strain CCS1).